The primary structure comprises 611 residues: MALTNFSLPFGALGQPWGVTIAPLHPIHQLASNTNNLLYSPADHQQQTPAEAAADPEYFKNNPYAPPQSGGYQYQNTAGRRKQSNAYLPPTAPNAVRNSVYHIQQVQQTQQQQTQQQHQQQDQHENSVSFQSSSSRSSSSSTTGQSSIQLTQTHASGRGPAEGSYSRYPGQQAQPPQQQQPQQKQYFNAHGSASATFTKNSGSFSITSFGSRQQQQQPPQPQQPPPSQQQQPPPAPPPQRSRQAKPEAQPAQTYGVAPPENYPERAPGFTRVQAGQGSRTQVHAVLDYDVEEGEEDEEEDGEEEGQFYEGQENDKSNNNQMPTVTPIQGPIYLKNGTVPVVPLFSYPKLNNGSFLQIPIWWTALSVALGLDVRGDVIKGVPCIKRYHQLFCPTAGNSYPIDKIERFIDDNKALMRRMYGDFEMNMEGPGGGGGRQQGKVRKRRFIDEPDIFIPPGAFAANAGETVEAGDSYFGQLRKKRQAAAGGSRNRGGSAGGSGNGNTNANRQPGNKNGSSGTGRLDACESKIEIVTPYWASNSAGKIRAIVNTQHFEQAIHQEVCSNTQTPRCEGECGCEQKYKWHRLLAYDPDNDCKGIFMDWFLFPSCCVCRCNP.

Residues 1-14 (MALTNFSLPFGALG) form the signal peptide. Residue Asn-5 is glycosylated (N-linked (GlcNAc...) asparagine). Residues 57-322 (EYFKNNPYAP…NDKSNNNQMP (266 aa)) form a disordered region. Low complexity-rich tracts occupy residues 104-120 (QQVQQTQQQQTQQQHQQ), 127-153 (SVSFQSSSSRSSSSSTTGQSSIQLTQT), and 169-185 (PGQQAQPPQQQQPQQKQ). Over residues 191-210 (GSASATFTKNSGSFSITSFG) the composition is skewed to polar residues. Residues 218-239 (PPQPQQPPPSQQQQPPPAPPPQ) are compositionally biased toward pro residues. Residues 288–306 (YDVEEGEEDEEEDGEEEGQ) show a composition bias toward acidic residues. N-linked (GlcNAc...) asparagine glycosylation is found at Asn-335 and Asn-351. The disordered stretch occupies residues 477 to 518 (KKRQAAAGGSRNRGGSAGGSGNGNTNANRQPGNKNGSSGTGR). Over residues 487-498 (RNRGGSAGGSGN) the composition is skewed to gly residues. The N-linked (GlcNAc...) asparagine glycan is linked to Asn-511. Residues 521-609 (ACESKIEIVT…LFPSCCVCRC (89 aa)) form the Spaetzle domain. Intrachain disulfides connect Cys-522–Cys-573, Cys-559–Cys-605, and Cys-567–Cys-607.

As to quaternary structure, homodimer; disulfide-linked.

Neurotrophin which may function as a ligand to the Toll-related receptor Tollo. Involved in a Tollo and JNK signaling pathway that positively regulates neuromuscular junction (NMJ) growth in presynaptic motorneurons. May function by activating Tollo to promote the phosphorylation of JNK. The polypeptide is Protein spaetzle 3 (Drosophila melanogaster (Fruit fly)).